The sequence spans 1402 residues: Baculoviral IAP repeat-containing protein 1g (1402 aa).

BIR repeat units lie at residues 60–127 (EAKR…CEFL), 159–227 (EEAR…CEFL), and 278–345 (EELR…CVFL). Zn(2+)-binding residues include C315, C318, H335, and C342. The NACHT domain maps to 464–759 (SVMCVEGEAG…EFLAAVRLTE (296 aa)). K476 provides a ligand contact to ATP.

Its function is as follows. Prevents motor-neuron apoptosis induced by a variety of signals. In Mus musculus (Mouse), this protein is Baculoviral IAP repeat-containing protein 1g (Naip7).